The chain runs to 269 residues: 4-hydroxy-tetrahydrodipicolinate reductase (269 aa).

NAD(+) contacts are provided by residues 8–13 (GAAGRM) and Glu34. Arg35 is an NADP(+) binding site. Residues 98–100 (GTT) and 122–125 (APNY) each bind NAD(+). The active-site Proton donor/acceptor is the His155. His156 serves as a coordination point for (S)-2,3,4,5-tetrahydrodipicolinate. The Proton donor role is filled by Lys159. 165 to 166 (GT) contributes to the (S)-2,3,4,5-tetrahydrodipicolinate binding site.

This sequence belongs to the DapB family.

The protein resides in the cytoplasm. The enzyme catalyses (S)-2,3,4,5-tetrahydrodipicolinate + NAD(+) + H2O = (2S,4S)-4-hydroxy-2,3,4,5-tetrahydrodipicolinate + NADH + H(+). The catalysed reaction is (S)-2,3,4,5-tetrahydrodipicolinate + NADP(+) + H2O = (2S,4S)-4-hydroxy-2,3,4,5-tetrahydrodipicolinate + NADPH + H(+). The protein operates within amino-acid biosynthesis; L-lysine biosynthesis via DAP pathway; (S)-tetrahydrodipicolinate from L-aspartate: step 4/4. Catalyzes the conversion of 4-hydroxy-tetrahydrodipicolinate (HTPA) to tetrahydrodipicolinate. The polypeptide is 4-hydroxy-tetrahydrodipicolinate reductase (Vibrio campbellii (strain ATCC BAA-1116)).